A 1137-amino-acid chain; its full sequence is Phytochrome C (1137 aa).

Residues 1 to 18 (MSSSRSNNRATCSRSSSA) are compositionally biased toward low complexity. A disordered region spans residues 1–27 (MSSSRSNNRATCSRSSSARSKHSARVV). The GAF domain occupies 217 to 400 (NLSLLCDVLV…VFGIQINKEV (184 aa)). Cys322 contacts phytochromobilin. PAS domains lie at 620–690 (VTNE…LQGI) and 750–824 (IQGD…TKLS). In terms of domain architecture, Histidine kinase spans 904–1124 (YIRQELRNPL…IVLVEFPVAQ (221 aa)).

This sequence belongs to the phytochrome family. In terms of assembly, homodimer. Contains one covalently linked phytochromobilin chromophore.

Its function is as follows. Regulatory photoreceptor which exists in two forms that are reversibly interconvertible by light: the Pr form that absorbs maximally in the red region of the spectrum and the Pfr form that absorbs maximally in the far-red region. Photoconversion of Pr to Pfr induces an array of morphogenic responses, whereas reconversion of Pfr to Pr cancels the induction of those responses. Pfr controls the expression of a number of nuclear genes including those encoding the small subunit of ribulose-bisphosphate carboxylase, chlorophyll A/B binding protein, protochlorophyllide reductase, rRNA, etc. It also controls the expression of its own gene(s) in a negative feedback fashion. This is Phytochrome C (PHYC) from Oryza sativa subsp. japonica (Rice).